The sequence spans 426 residues: Serine--tRNA ligase (426 aa).

An L-serine-binding site is contributed by 231 to 233; it reads TLE. 262–264 contacts ATP; it reads RSE. Glu285 serves as a coordination point for L-serine. 349 to 352 is an ATP binding site; sequence EISS. Ser385 is an L-serine binding site.

This sequence belongs to the class-II aminoacyl-tRNA synthetase family. Type-1 seryl-tRNA synthetase subfamily. In terms of assembly, homodimer. The tRNA molecule binds across the dimer.

It is found in the cytoplasm. It catalyses the reaction tRNA(Ser) + L-serine + ATP = L-seryl-tRNA(Ser) + AMP + diphosphate + H(+). It carries out the reaction tRNA(Sec) + L-serine + ATP = L-seryl-tRNA(Sec) + AMP + diphosphate + H(+). Its pathway is aminoacyl-tRNA biosynthesis; selenocysteinyl-tRNA(Sec) biosynthesis; L-seryl-tRNA(Sec) from L-serine and tRNA(Sec): step 1/1. Its function is as follows. Catalyzes the attachment of serine to tRNA(Ser). Is also able to aminoacylate tRNA(Sec) with serine, to form the misacylated tRNA L-seryl-tRNA(Sec), which will be further converted into selenocysteinyl-tRNA(Sec). The chain is Serine--tRNA ligase from Malacoplasma penetrans (strain HF-2) (Mycoplasma penetrans).